Here is a 307-residue protein sequence, read N- to C-terminus: Putative F-box protein PP2-B6 (307 aa).

The 47-residue stretch at 42–88 (HSPFDDLPEDCISNIISFTSPRDVCVSASVSKSFAHAVQCDSIWEKF) folds into the F-box domain.

The polypeptide is Putative F-box protein PP2-B6 (PP2B6) (Arabidopsis thaliana (Mouse-ear cress)).